We begin with the raw amino-acid sequence, 253 residues long: MMLSATQPLSEKLPAHGCRHVAIIMDGNGRWAKKQGKIRAFGHKAGAKSVRRAVSFAANNGIEALTLYAFSSENWNRPAQEVSALMELFVWALDSEVKSLHRHNVRLRIIGDTSRFNSRLQERIRKSEALTAGNTGLTLNIAANYGGRWDIVQGVRQLAEKVQQGNLQPDQIDEEMLNQHVCMHELAPVDLVIRTGGEHRISNFLLWQIAYAELYFTDVLWPDFDEQDFEGALNAFANRERRFGGTEPGDETA.

Asp26 is a catalytic residue. Mg(2+) is bound at residue Asp26. Residues 27–30 (GNGR), Trp31, Arg39, His43, and 71–73 (SSE) contribute to the substrate site. Residue Asn74 is the Proton acceptor of the active site. Residues Trp75, Arg77, and Arg194 each coordinate substrate. Residue His199 participates in Mg(2+) binding. 200–202 (RIS) is a substrate binding site. Glu213 contacts Mg(2+).

Belongs to the UPP synthase family. Homodimer. Mg(2+) is required as a cofactor.

The enzyme catalyses 8 isopentenyl diphosphate + (2E,6E)-farnesyl diphosphate = di-trans,octa-cis-undecaprenyl diphosphate + 8 diphosphate. Functionally, catalyzes the sequential condensation of isopentenyl diphosphate (IPP) with (2E,6E)-farnesyl diphosphate (E,E-FPP) to yield (2Z,6Z,10Z,14Z,18Z,22Z,26Z,30Z,34E,38E)-undecaprenyl diphosphate (di-trans,octa-cis-UPP). UPP is the precursor of glycosyl carrier lipid in the biosynthesis of bacterial cell wall polysaccharide components such as peptidoglycan and lipopolysaccharide. This chain is Ditrans,polycis-undecaprenyl-diphosphate synthase ((2E,6E)-farnesyl-diphosphate specific), found in Shigella flexneri.